The chain runs to 1450 residues: Collagen alpha-1(I) chain (1450 aa).

A signal peptide spans 1–22; that stretch reads MFSFVDNRLLVLLAACVLLVRA. A propeptide spans 23 to 148 (N-terminal propeptide); sequence LDQEDIESGL…PPGLGGNFAP (126 aa). Residues 31–90 form the VWFC domain; the sequence is GLCHQEGTTYSDKDVWKPEPCVICVCDNGNIMCDDVTCGDYPVDCPNAEIPFGECCPVCP. Positions 97-1201 are disordered; it reads YSEQTGVEGP…EPKSHGDGRY (1105 aa). The span at 106-116 shows a compositional bias: basic and acidic residues; that stretch reads PKGEVGPKGDR. A compositionally biased stretch (pro residues) spans 130 to 140; that stretch reads LPGPPGPPGPP. The residue at position 149 (glutamine 149) is a Pyrrolidone carboxylic acid. Residue lysine 157 is modified to Allysine. Positions 166–181 are enriched in pro residues; sequence PMGPMGPRGPPGPSGS. 4-hydroxyproline is present on residues proline 176, proline 182, proline 194, proline 197, proline 212, proline 227, proline 242, and proline 248. The span at 182–206 shows a compositional bias: low complexity; that stretch reads PGPQGFQGPSGEPGEPGAAGALGPR. The span at 215–229 shows a compositional bias: basic and acidic residues; that stretch reads NGDDGESGKPGRPGE. Lysine 251 carries the post-translational modification 5-hydroxylysine; alternate. Lysine 251 carries O-linked (Gal...) hydroxylysine; alternate glycosylation. Over residues 266 to 292 the composition is skewed to low complexity; the sequence is NGPAGPKGEPGNPGENGAPGQAGPRGL. 4-hydroxyproline occurs at positions 275, 278, 284, 293, 299, 314, 320, 329, 332, 359, 362, 374, 380, 389, 395, 398, and 413. Residues 317–331 show a composition bias toward pro residues; sequence AGPPGPTGPTGPPGF. Low complexity predominate over residues 352–374; that stretch reads PQGARGEPGAPGPAGAAGPSGNP. Gly residues predominate over residues 378–387; the sequence is GQPGGKGATG. The span at 388 to 443 shows a compositional bias: low complexity; sequence SPGIAGAPGFPGARGAPGPQGPAGAPGPKGNNGEPGAQGNKGEPGAKGEPGPAGVQ. The residue at position 416 (lysine 416) is a 5-hydroxylysine. 4-hydroxyproline occurs at positions 422, 437, 446, 461, 467, 476, and 482. The segment covering 471–480 has biased composition (gly residues); sequence GERGGPGSRG. A 5-hydroxylysine modification is found at lysine 491. 4-hydroxyproline is present on residues proline 494, proline 515, proline 521, proline 530, proline 533, proline 551, proline 569, proline 578, proline 590, proline 608, proline 626, proline 632, proline 644, proline 650, proline 656, and proline 668. Composition is skewed to low complexity over residues 568–578 and 586–596; these read FPGPKGAAGEP and VAGPPGATGAP. Residues 637 to 650 show a composition bias toward low complexity; it reads PAGEAGKPGEQGAP. Over residues 669-678 the composition is skewed to gly residues; the sequence is GERGGQGPAG. Residues 679–701 are compositionally biased toward low complexity; sequence AQGPRGSPGSPGNDGAKGEAGAA. 4-hydroxyproline is present on residues proline 689, proline 704, proline 710, proline 716, and proline 725. Positions 702–711 are enriched in gly residues; sequence GAPGGRGPPG. Lysine 737 is modified (5-hydroxylysine). A 4-hydroxyproline mark is found at proline 743, proline 758, proline 764, proline 785, proline 791, proline 794, proline 803, proline 809, proline 827, proline 836, and proline 845. Residues 796-806 are compositionally biased toward low complexity; the sequence is PAGICGPPGAD. Over residues 817–869 the composition is skewed to low complexity; the sequence is DAGPKGDAGAPGPAGPTGAPGPAGNVGAPGPKGTRGAAGPPGATGFPGAAGRL. Lysine 848 is modified (5-hydroxylysine). 4-hydroxyproline is present on residues proline 857 and proline 863. A 3-hydroxyproline modification is found at proline 871. Residues proline 872, proline 881, proline 884, proline 908, proline 914, proline 923, proline 932, proline 950, proline 962, proline 968, proline 983, proline 989, proline 995, proline 1004, and proline 1010 each carry the 4-hydroxyproline modification. Residues 917–943 show a composition bias toward low complexity; that stretch reads SGEKGSPGSDGPAGAPGIPGPQGIAGQ. The span at 982 to 997 shows a compositional bias: pro residues; the sequence is PPGPSGPPGLGGPPGE. Residue lysine 1019 is modified to 5-hydroxylysine. Over residues 1028–1043 the composition is skewed to pro residues; the sequence is SGPPGAPGAPGAPGPV. Proline 1031, proline 1034, and proline 1037 each carry 4-hydroxyproline. The segment covering 1064 to 1078 has biased composition (low complexity); sequence AGPSGVRGAPGPAGA. Positions 1079–1093 are enriched in basic and acidic residues; that stretch reads RGDKGEAGEQGERGM. At lysine 1082 the chain carries 5-hydroxylysine. Residue lysine 1094 is modified to 5-hydroxylysine; alternate. An O-linked (Gal...) hydroxylysine; alternate glycan is attached at lysine 1094. A 4-hydroxyproline mark is found at proline 1106 and proline 1109. Pro residues predominate over residues 1120 to 1129; it reads PSGPAGPRGP. Residues proline 1130 and proline 1145 each carry the 4-hydroxyproline modification. Over residues 1130 to 1145 the composition is skewed to low complexity; that stretch reads PGSSGSTGKDGVNGLP. A 3-hydroxyproline modification is found at proline 1150. A 4-hydroxyproline modification is found at proline 1151. The span at 1163 to 1178 shows a compositional bias: pro residues; that stretch reads AGPPGPPGPPGPPGPP. Residue proline 1165 is modified to 3-hydroxyproline. Residue proline 1166 is modified to 4-hydroxyproline. Proline 1168 carries the post-translational modification 3-hydroxyproline. Position 1169 is a 4-hydroxyproline (proline 1169). At proline 1171 the chain carries 3-hydroxyproline. 4-hydroxyproline is present on residues proline 1172, proline 1175, and proline 1178. An Allysine modification is found at lysine 1194. The propeptide at 1205 to 1450 is C-terminal propeptide; it reads DDANVVRDRD…GIDIGPVCFL (246 aa). Residues 1215-1450 form the Fibrillar collagen NC1 domain; the sequence is LEVDTTLKSL…GIDIGPVCFL (236 aa). Disulfide bonds link cysteine 1245–cysteine 1277, cysteine 1285–cysteine 1448, and cysteine 1356–cysteine 1401. Ca(2+) contacts are provided by aspartate 1263, asparagine 1265, glutamine 1266, cysteine 1268, and aspartate 1271. Residue asparagine 1351 is glycosylated (N-linked (GlcNAc...) asparagine).

This sequence belongs to the fibrillar collagen family. As to quaternary structure, trimers of one alpha 2(I) and two alpha 1(I) chains. Contains mostly 4-hydroxyproline. Proline residues at the third position of the tripeptide repeating unit (G-X-Y) are hydroxylated in some or all of the chains. In terms of processing, contains 3-hydroxyproline at a few sites. This modification occurs on the first proline residue in the sequence motif Gly-Pro-Hyp, where Hyp is 4-hydroxyproline. Post-translationally, lysine residues at the third position of the tripeptide repeating unit (G-X-Y) are 5-hydroxylated in some or all of the chains. O-glycosylated on hydroxylated lysine residues. The O-linked glycan consists of a Glc-Gal disaccharide.

It localises to the secreted. It is found in the extracellular space. Its subcellular location is the extracellular matrix. Type I collagen is a member of group I collagen (fibrillar forming collagen). The sequence is that of Collagen alpha-1(I) chain (COL1A1) from Cynops pyrrhogaster (Japanese fire-bellied newt).